Reading from the N-terminus, the 265-residue chain is Deoxycytidine kinase 1 (265 aa).

30–38 (GNIAAGKST) contributes to the ATP binding site. Substrate is bound by residues E55, Y88, and Q99. E129 functions as the Proton acceptor in the catalytic mechanism. Positions 130 and 135 each coordinate substrate. 190–194 (RVYTR) contributes to the ATP binding site. E199 lines the substrate pocket. Residue 242 to 244 (EDF) coordinates ATP.

This sequence belongs to the DCK/DGK family. In terms of assembly, homodimer.

Its subcellular location is the nucleus. It catalyses the reaction 2'-deoxycytidine + a ribonucleoside 5'-triphosphate = dCMP + a ribonucleoside 5'-diphosphate + H(+). The enzyme catalyses 2'-deoxyguanosine + ATP = dGMP + ADP + H(+). The catalysed reaction is 2'-deoxyadenosine + ATP = dAMP + ADP + H(+). Its function is as follows. Phosphorylates the deoxyribonucleosides deoxyadenosine, deoxycytidine and deoxyguanosine with highest activity against deoxycytidine followed by deadenosine and deoxyguanosine. Shows only very minor activity against deoxyuridine and deoxythymidine. This chain is Deoxycytidine kinase 1, found in Xenopus laevis (African clawed frog).